Consider the following 525-residue polypeptide: Putative ribose/galactose/methyl galactoside import ATP-binding protein (525 aa).

The interval 1 to 20 (MSGSATASPPAKPDLPSSDG) is disordered. ABC transporter domains are found at residues 33-269 (LEIS…VGRE) and 279-523 (KPAG…SGHR). 65–72 (GENGAGKS) is an ATP binding site.

The protein belongs to the ABC transporter superfamily. Carbohydrate importer 2 (CUT2) (TC 3.A.1.2) family.

The protein localises to the cell inner membrane. The catalysed reaction is D-ribose(out) + ATP + H2O = D-ribose(in) + ADP + phosphate + H(+). It catalyses the reaction D-galactose(out) + ATP + H2O = D-galactose(in) + ADP + phosphate + H(+). Functionally, part of an ABC transporter complex involved in carbohydrate import. Could be involved in ribose, galactose and/or methyl galactoside import. Responsible for energy coupling to the transport system. This chain is Putative ribose/galactose/methyl galactoside import ATP-binding protein, found in Pseudomonas syringae pv. tomato (strain ATCC BAA-871 / DC3000).